Reading from the N-terminus, the 500-residue chain is Na(+)/H(+) antiporter NhaB (500 aa).

The next 11 helical transmembrane spans lie at 23–43, 53–73, 96–116, 129–149, 150–170, 205–225, 238–258, 311–331, 350–370, 450–470, and 477–497; these read VVIC…GPVA, IFTL…LLLI, VILL…LLLF, AILA…LDAL, TVTA…HRVA, LLMH…VGEP, FVDF…AGLV, ILII…LMVI, FQDA…VAVI, ATPN…APLI, and MVWM…WAVT.

The protein belongs to the NhaB Na(+)/H(+) (TC 2.A.34) antiporter family.

It localises to the cell inner membrane. It catalyses the reaction 2 Na(+)(in) + 3 H(+)(out) = 2 Na(+)(out) + 3 H(+)(in). Functionally, na(+)/H(+) antiporter that extrudes sodium in exchange for external protons. In Pseudomonas putida (strain ATCC 47054 / DSM 6125 / CFBP 8728 / NCIMB 11950 / KT2440), this protein is Na(+)/H(+) antiporter NhaB.